Consider the following 477-residue polypeptide: Glycogen synthase (477 aa).

Lys15 provides a ligand contact to ADP-alpha-D-glucose.

This sequence belongs to the glycosyltransferase 1 family. Bacterial/plant glycogen synthase subfamily.

It catalyses the reaction [(1-&gt;4)-alpha-D-glucosyl](n) + ADP-alpha-D-glucose = [(1-&gt;4)-alpha-D-glucosyl](n+1) + ADP + H(+). Its pathway is glycan biosynthesis; glycogen biosynthesis. Functionally, synthesizes alpha-1,4-glucan chains using ADP-glucose. The polypeptide is Glycogen synthase (Shigella boydii serotype 18 (strain CDC 3083-94 / BS512)).